The chain runs to 180 residues: Cytochrome b6-f complex subunit 4 (180 aa).

The next 3 helical transmembrane spans lie at 36–56 (LSYIFPVVILGTIACTIGLAV), 95–115 (LLGVLLMGSVPAGSLTVPFLE), and 131–151 (TVSLIGTAVALWLGIGAALPI).

The protein belongs to the cytochrome b family. PetD subfamily. In terms of assembly, the 4 large subunits of the cytochrome b6-f complex are cytochrome b6, subunit IV (17 kDa polypeptide, petD), cytochrome f and the Rieske protein, while the 4 small subunits are petG, petL, petM and petN. The complex functions as a dimer.

It localises to the plastid. It is found in the chloroplast thylakoid membrane. Its function is as follows. Component of the cytochrome b6-f complex, which mediates electron transfer between photosystem II (PSII) and photosystem I (PSI), cyclic electron flow around PSI, and state transitions. The chain is Cytochrome b6-f complex subunit 4 from Pinus thunbergii (Japanese black pine).